A 61-amino-acid polypeptide reads, in one-letter code: MAVPQSKTSRSRRDMRRAHDFLVTVNRSVCANCGAAKLPHHVCPECGFYKGREIVKKAVEA.

It belongs to the bacterial ribosomal protein bL32 family.

In Acidithiobacillus ferrooxidans (strain ATCC 23270 / DSM 14882 / CIP 104768 / NCIMB 8455) (Ferrobacillus ferrooxidans (strain ATCC 23270)), this protein is Large ribosomal subunit protein bL32.